A 430-amino-acid polypeptide reads, in one-letter code: Endochitinase 46 (430 aa).

Positions 1-22 (MLSFLGKSVALLAALQATLSSA) are cleaved as a signal peptide. Residues 23–35 (SPLATEERSIEKR) constitute a propeptide that is removed on maturation. A GH18 domain is found at 39–408 (YANSVYFTNW…GTSHRALGGL (370 aa)). Chitin is bound by residues 103 to 104 (GT) and 130 to 133 (GGWT). Residue Glu-172 is the Proton donor of the active site. Residue Tyr-173 coordinates chitin. An N-linked (GlcNAc...) asparagine glycan is attached at Asn-219. Chitin-binding positions include 238–241 (MAYD) and Trp-385.

Belongs to the glycosyl hydrolase 18 family. Chitinase class V subfamily.

It localises to the secreted. The enzyme catalyses Random endo-hydrolysis of N-acetyl-beta-D-glucosaminide (1-&gt;4)-beta-linkages in chitin and chitodextrins.. Its function is as follows. Secreted chitinase involved in the degradation of chitin, a component of the cell walls of fungi and exoskeletal elements of some animals (including worms and arthropods). Plays a morphogenetic role during apical growth, cell division and differentiation (cell wall morphogenesis). Also acts as an antifungal agent. Involved in the degradation and further assimilation of phytopathogenic fungi, namely mycoparasitism, the major mechanism accounting for the antagonistic activity against phytopathogenic fungi displayed by Trichoderma. This Trichoderma harzianum (Hypocrea lixii) protein is Endochitinase 46 (chit46).